A 225-amino-acid chain; its full sequence is Membrane protein (225 aa).

Over 1-20 (MDNTTNCTLGTEQAVQLFKE) the chain is Virion surface. The chain crosses the membrane as a helical span at residues 21–41 (YNLFVTAFLLFLTILLQYGYA). Residues 42–51 (TRNKVIYILK) are Intravirion-facing. A helical transmembrane segment spans residues 52 to 72 (MIVLWCFWPLNIAVGAISCIY). Topologically, residues 73 to 77 (PPNTG) are virion surface. A helical membrane pass occupies residues 78–98 (GLVAAIILTVFACLSFIGYWI). Over 99–225 (QSFRLFKRCR…VATGGSSLYT (127 aa)) the chain is Intravirion.

It belongs to the gammacoronaviruses M protein family. Homomultimer. Interacts with envelope E protein in the budding compartment of the host cell, which is located between endoplasmic reticulum and the Golgi complex. Forms a complex with HE and S proteins. Interacts with nucleocapsid N protein. This interaction probably participates in RNA packaging into the virus.

The protein localises to the virion membrane. The protein resides in the host Golgi apparatus membrane. Component of the viral envelope that plays a central role in virus morphogenesis and assembly via its interactions with other viral proteins. The protein is Membrane protein of Avian infectious bronchitis virus (strain 6/82) (IBV).